Reading from the N-terminus, the 374-residue chain is Cell division protein C (374 aa).

Residues 11–73 enclose the MIT domain; sequence ARKYAINAVK…YKRRIEVLKE (63 aa). ATP is bound at residue 144–151; that stretch reads GPPGCGKT.

The protein belongs to the AAA ATPase family. Interacts with CdvB.

It is found in the cytoplasm. Its subcellular location is the nucleoid. Functionally, part of a cell division machinery. The CdvA, CdvB and CdvC proteins polymerize between segregating nucleoids and persist throughout cell division, forming a successively smaller structure during constriction. This Sulfolobus acidocaldarius (strain ATCC 33909 / DSM 639 / JCM 8929 / NBRC 15157 / NCIMB 11770) protein is Cell division protein C.